A 133-amino-acid chain; its full sequence is Large-conductance mechanosensitive channel (133 aa).

The next 2 helical transmembrane spans lie at 10–30 and 76–96; these read FAVK…AAFG and GIFV…FLVV.

This sequence belongs to the MscL family. In terms of assembly, homopentamer.

The protein resides in the cell inner membrane. Channel that opens in response to stretch forces in the membrane lipid bilayer. May participate in the regulation of osmotic pressure changes within the cell. This Chlorobium phaeobacteroides (strain BS1) protein is Large-conductance mechanosensitive channel.